Reading from the N-terminus, the 114-residue chain is UPF0145 protein TT_C1581 (114 aa).

The protein belongs to the UPF0145 family.

The sequence is that of UPF0145 protein TT_C1581 from Thermus thermophilus (strain ATCC BAA-163 / DSM 7039 / HB27).